Reading from the N-terminus, the 72-residue chain is NAD(P)H-quinone oxidoreductase subunit O (72 aa).

Belongs to the complex I NdhO subunit family. As to quaternary structure, NDH-1 can be composed of about 15 different subunits; different subcomplexes with different compositions have been identified which probably have different functions.

It localises to the cellular thylakoid membrane. It carries out the reaction a plastoquinone + NADH + (n+1) H(+)(in) = a plastoquinol + NAD(+) + n H(+)(out). The enzyme catalyses a plastoquinone + NADPH + (n+1) H(+)(in) = a plastoquinol + NADP(+) + n H(+)(out). NDH-1 shuttles electrons from an unknown electron donor, via FMN and iron-sulfur (Fe-S) centers, to quinones in the respiratory and/or the photosynthetic chain. The immediate electron acceptor for the enzyme in this species is believed to be plastoquinone. Couples the redox reaction to proton translocation, and thus conserves the redox energy in a proton gradient. Cyanobacterial NDH-1 also plays a role in inorganic carbon-concentration. The chain is NAD(P)H-quinone oxidoreductase subunit O from Gloeothece citriformis (strain PCC 7424) (Cyanothece sp. (strain PCC 7424)).